A 418-amino-acid polypeptide reads, in one-letter code: Mitochondrial distribution and morphology protein 10 (418 aa).

The protein belongs to the MDM10 family. As to quaternary structure, component of the ER-mitochondria encounter structure (ERMES) or MDM complex, composed of MMM1, MDM10, MDM12 and MDM34. Associates with the mitochondrial outer membrane sorting assembly machinery SAM(core) complex.

Its subcellular location is the mitochondrion outer membrane. Component of the ERMES/MDM complex, which serves as a molecular tether to connect the endoplasmic reticulum and mitochondria. Components of this complex are involved in the control of mitochondrial shape and protein biogenesis and may function in phospholipid exchange. MDM10 is involved in the late assembly steps of the general translocase of the mitochondrial outer membrane (TOM complex). Functions in the TOM40-specific route of the assembly of outer membrane beta-barrel proteins, including the association of TOM40 with the receptor TOM22 and small TOM proteins. Can associate with the SAM(core) complex as well as the MDM12-MMM1 complex, both involved in late steps of the major beta-barrel assembly pathway, that is responsible for biogenesis of all outer membrane beta-barrel proteins. May act as a switch that shuttles between both complexes and channels precursor proteins into the TOM40-specific pathway. Plays a role in mitochondrial morphology and in the inheritance of mitochondria. The sequence is that of Mitochondrial distribution and morphology protein 10 from Meyerozyma guilliermondii (strain ATCC 6260 / CBS 566 / DSM 6381 / JCM 1539 / NBRC 10279 / NRRL Y-324) (Yeast).